We begin with the raw amino-acid sequence, 1551 residues long: Dual oxidase 1 (1551 aa).

The signal sequence occupies residues 1–21; that stretch reads MAVYSAVAWILLFGVLASLGA. Residues 22–596 are Extracellular-facing; the sequence is QNPVSWEVQR…YFKGSGFGFG (575 aa). Residues 26–593 are peroxidase-like; mediates peroxidase activity; that stretch reads SWEVQRFDGW…VRDYFKGSGF (568 aa). Residues N94, N342, N354, N461, and N534 are each glycosylated (N-linked (GlcNAc...) asparagine). The chain crosses the membrane as a helical span at residues 597-617; it reads LTIGTLCCFPLVSLLSAWIVA. Topologically, residues 618-1044 are cytoplasmic; it reads RLRMRNFKRL…KRFIENYRRH (427 aa). EF-hand domains follow at residues 815–850, 851–886, and 895–930; these read PQDM…FMKG, SPEE…FIEI, and QLAE…HDSD. Ca(2+) is bound by residues D828, D830, N832, Y834, E839, D864, D866, N868, and E875. The interaction with TXNDC11 stretch occupies residues 956–1248; the sequence is YISQEKICPS…GSFALIQMPR (293 aa). A helical membrane pass occupies residues 1045–1065; it reads IGCVAVFYTITGALFLERAYY. Residues 1066–1080 are Extracellular-facing; sequence YAFAAHHSGITDTTR. A helical membrane pass occupies residues 1081 to 1101; sequence VGIILSRGTAASISFMFSYIL. In terms of domain architecture, Ferric oxidoreductase spans 1087-1269; it reads RGTAASISFM…YVGDKLVSLS (183 aa). The Cytoplasmic portion of the chain corresponds to 1102–1136; that stretch reads LTMCRNLITFLRETFLNRYIPFDAAVDFHRFIAST. The helical transmembrane segment at 1137–1157 threads the bilayer; it reads AIILTVLHSAGHVVNVYLFSI. Topologically, residues 1158 to 1188 are extracellular; that stretch reads SPLSVLSCLFPDLFHDDGSEFPQKYYWWFFQ. The chain crosses the membrane as a helical span at residues 1189-1209; that stretch reads TVPGLTGVLLLLALAIMYVFA. Residues 1210–1226 are Cytoplasmic-facing; that stretch reads SHHFRRRSFRGFWLTHH. A helical transmembrane segment spans residues 1227–1247; sequence LYIFLYILLIIHGSFALIQMP. A topological domain (extracellular) is located at residue R1248. Residues 1249-1269 form a helical membrane-spanning segment; it reads FHIFFLVPAIIYVGDKLVSLS. One can recognise an FAD-binding FR-type domain in the interval 1270–1376; the sequence is RKKVEISVVK…DGPFGEGHQE (107 aa). The Cytoplasmic portion of the chain corresponds to 1270 to 1551; that stretch reads RKKVEISVVK…THFSHHYENF (282 aa).

It in the N-terminal section; belongs to the peroxidase family. In terms of assembly, interacts with TXNDC11, TPO and CYBA. In terms of processing, N-glycosylated. Expressed in thyrocytes (at protein level).

It is found in the apical cell membrane. The catalysed reaction is NADH + O2 + H(+) = H2O2 + NAD(+). It carries out the reaction NADPH + O2 + H(+) = H2O2 + NADP(+). It participates in hormone biosynthesis; thyroid hormone biosynthesis. Its activity is regulated as follows. The NADPH oxidase activity is calcium-dependent. Peroxidase activity is inhibited by aminobenzohydrazide. Functionally, generates hydrogen peroxide which is required for the activity of thyroid peroxidase/TPO and lactoperoxidase/LPO. Plays a role in thyroid hormones synthesis and lactoperoxidase-mediated antimicrobial defense at the surface of mucosa. May have its own peroxidase activity through its N-terminal peroxidase-like domain. The polypeptide is Dual oxidase 1 (Duox1) (Rattus norvegicus (Rat)).